The following is a 322-amino-acid chain: Eukaryotic translation initiation factor 3 subunit I (322 aa).

WD repeat units lie at residues 4 to 43 (GHER…RLGT), 46 to 85 (GHQG…IIAS), 141 to 180 (MTES…KVVD), 184 to 223 (DHTA…CLKT), and 281 to 322 (GHFG…NIFE).

Belongs to the eIF-3 subunit I family. Component of the eukaryotic translation initiation factor 3 (eIF-3) complex. The eIF-3 complex interacts with pix.

Its subcellular location is the cytoplasm. Functionally, component of the eukaryotic translation initiation factor 3 (eIF-3) complex, which is involved in protein synthesis of a specialized repertoire of mRNAs and, together with other initiation factors, stimulates binding of mRNA and methionyl-tRNAi to the 40S ribosome. The eIF-3 complex specifically targets and initiates translation of a subset of mRNAs involved in cell proliferation. The protein is Eukaryotic translation initiation factor 3 subunit I of Drosophila ananassae (Fruit fly).